A 527-amino-acid polypeptide reads, in one-letter code: Catalase (527 aa).

Ala-2 carries the post-translational modification N-acetylalanine. The residue at position 9 (Ser-9) is a Phosphoserine. Active-site residues include His-75 and Asn-148. His-194, Ser-201, Arg-203, and Asn-213 together coordinate NADP(+). Residue Lys-221 is modified to N6-succinyllysine. Lys-233 carries the post-translational modification N6-acetyllysine. Residues Lys-237, Trp-303, His-305, and Lys-306 each coordinate NADP(+). At Lys-306 the chain carries N6-acetyllysine; alternate. N6-succinyllysine; alternate is present on Lys-306. Tyr-358 lines the heme pocket. A phosphoserine mark is found at Ser-417 and Ser-422. Position 480 is an N6-acetyllysine; alternate (Lys-480). Lys-480 carries the post-translational modification N6-succinyllysine; alternate. Lys-499 is modified (N6-acetyllysine). Thr-511 bears the Phosphothreonine mark. 2 positions are modified to phosphoserine: Ser-515 and Ser-517. The Microbody targeting signal; atypical motif lies at 524-527 (KANL).

This sequence belongs to the catalase family. As to quaternary structure, homotetramer. Interacts (via microbody targeting signal) with PEX5, monomeric form interacts with PEX5, leading to its translocation into peroxisomes. Requires heme as cofactor. It depends on NADP(+) as a cofactor.

The protein localises to the peroxisome matrix. It carries out the reaction 2 H2O2 = O2 + 2 H2O. Its function is as follows. Catalyzes the degradation of hydrogen peroxide (H(2)O(2)) generated by peroxisomal oxidases to water and oxygen, thereby protecting cells from the toxic effects of hydrogen peroxide. Promotes growth of cells including T-cells, B-cells, myeloid leukemia cells, melanoma cells, mastocytoma cells and normal and transformed fibroblast cells. The protein is Catalase (CAT) of Homo sapiens (Human).